Here is a 440-residue protein sequence, read N- to C-terminus: MRLSRYFMPILKENPKEAEIVSHRLMLRAGMIRQQSQGIYSWLPLGKRVLDKVNAIIREEQNRAGAIELSMPTLQSAELWQESGRYDAYGKEMLRIKDRQDRPMLYGPTNEEMVTDIFRSSVKSYKDLPLNLYHIQLKFRDEIRPRFGTMRSREFMMKDAYSFDLTREGAEHSYNKMFAAYLRTFERLGLRAIPMRADTGPIGGNLSHEFIILADTGESEVFCHKDFVGFDIPGENTDFDSVEGLKAIFDKWTSLYAATSEMHDEAAFNAVPEGDRLSARGIEVGHIFYFGTKYSEPMGAKVQGPDGKEHFVHMGSYGIGPTRLVPAIIEASHDDNGIIWPASVAPFDVVVINMKVGDQACDDTCELIYAALKKAGKDVLYDDTDDRAGTKFATADLIGVPVQIIAGPRAVANGEVEVKDRKTGARETMTIEAAINRFVA.

This sequence belongs to the class-II aminoacyl-tRNA synthetase family. ProS type 2 subfamily. As to quaternary structure, homodimer.

The protein resides in the cytoplasm. It catalyses the reaction tRNA(Pro) + L-proline + ATP = L-prolyl-tRNA(Pro) + AMP + diphosphate. In terms of biological role, catalyzes the attachment of proline to tRNA(Pro) in a two-step reaction: proline is first activated by ATP to form Pro-AMP and then transferred to the acceptor end of tRNA(Pro). This Rhizobium etli (strain ATCC 51251 / DSM 11541 / JCM 21823 / NBRC 15573 / CFN 42) protein is Proline--tRNA ligase.